We begin with the raw amino-acid sequence, 381 residues long: 1-deoxy-D-xylulose 5-phosphate reductoisomerase (381 aa).

Residues Thr-10, Gly-11, Ser-12, Ile-13, Gly-36, Lys-37, Asn-38, and Asn-122 each coordinate NADPH. Lys-123 contributes to the 1-deoxy-D-xylulose 5-phosphate binding site. Position 124 (Glu-124) interacts with NADPH. Residue Asp-148 participates in Mn(2+) binding. The 1-deoxy-D-xylulose 5-phosphate site is built by Ser-149, Glu-150, Ser-173, and His-196. Glu-150 is a Mn(2+) binding site. Position 202 (Gly-202) interacts with NADPH. 1-deoxy-D-xylulose 5-phosphate contacts are provided by Ser-209, Asn-214, Lys-215, and Glu-218. Glu-218 is a binding site for Mn(2+).

The protein belongs to the DXR family. Mg(2+) serves as cofactor. Mn(2+) is required as a cofactor.

It catalyses the reaction 2-C-methyl-D-erythritol 4-phosphate + NADP(+) = 1-deoxy-D-xylulose 5-phosphate + NADPH + H(+). Its pathway is isoprenoid biosynthesis; isopentenyl diphosphate biosynthesis via DXP pathway; isopentenyl diphosphate from 1-deoxy-D-xylulose 5-phosphate: step 1/6. Its function is as follows. Catalyzes the NADPH-dependent rearrangement and reduction of 1-deoxy-D-xylulose-5-phosphate (DXP) to 2-C-methyl-D-erythritol 4-phosphate (MEP). This Desulfitobacterium hafniense (strain DSM 10664 / DCB-2) protein is 1-deoxy-D-xylulose 5-phosphate reductoisomerase.